A 675-amino-acid polypeptide reads, in one-letter code: Probable potassium transport system protein Kup (675 aa).

Basic and acidic residues predominate over residues 1–12 (MEPAMPEHDGDH). Residues 1-25 (MEPAMPEHDGDHASNPPHGVGIPND) form a disordered region. A run of 12 helical transmembrane segments spans residues 62 to 82 (ALLA…LYAL), 104 to 124 (LASL…VILI), 153 to 173 (WLFG…SIIT), 195 to 215 (IIIP…VLGT), 222 to 242 (FGPI…KGIF), 255 to 275 (FALE…GSVV), 300 to 320 (WLFF…ALLI), 332 to 352 (LLVP…ATVI), 390 to 410 (IYLP…VLAF), 419 to 439 (AYGI…MVVF), 450 to 470 (VAIV…ANVL), and 472 to 492 (IPDG…IMTT).

This sequence belongs to the HAK/KUP transporter (TC 2.A.72) family.

It localises to the cell inner membrane. The enzyme catalyses K(+)(in) + H(+)(in) = K(+)(out) + H(+)(out). Transport of potassium into the cell. Likely operates as a K(+):H(+) symporter. The sequence is that of Probable potassium transport system protein Kup from Gluconobacter oxydans (strain 621H) (Gluconobacter suboxydans).